Reading from the N-terminus, the 916-residue chain is DNA gyrase subunit A (916 aa).

Positions 42 to 544 (LPDVRDGLKP…FGGDIADEDL (503 aa)) constitute a Topo IIA-type catalytic domain. The active-site O-(5'-phospho-DNA)-tyrosine intermediate is the tyrosine 130. A GyrA-box motif is present at residues 571-577 (QRRGGRG). A compositionally biased stretch (acidic residues) spans 739 to 748 (SDDLEDETAD). Disordered stretches follow at residues 739-774 (SDDLEDETADNENTLPSGKNGVRPSGRGSGGLRGMR) and 897-916 (ESELSGASVISNVTEPEAEN).

This sequence belongs to the type II topoisomerase GyrA/ParC subunit family. Heterotetramer, composed of two GyrA and two GyrB chains. In the heterotetramer, GyrA contains the active site tyrosine that forms a transient covalent intermediate with DNA, while GyrB binds cofactors and catalyzes ATP hydrolysis.

It is found in the cytoplasm. The catalysed reaction is ATP-dependent breakage, passage and rejoining of double-stranded DNA.. Its function is as follows. A type II topoisomerase that negatively supercoils closed circular double-stranded (ds) DNA in an ATP-dependent manner to modulate DNA topology and maintain chromosomes in an underwound state. Negative supercoiling favors strand separation, and DNA replication, transcription, recombination and repair, all of which involve strand separation. Also able to catalyze the interconversion of other topological isomers of dsDNA rings, including catenanes and knotted rings. Type II topoisomerases break and join 2 DNA strands simultaneously in an ATP-dependent manner. The polypeptide is DNA gyrase subunit A (Neisseria gonorrhoeae).